A 176-amino-acid polypeptide reads, in one-letter code: Large ribosomal subunit protein uL6 (176 aa).

It belongs to the universal ribosomal protein uL6 family. In terms of assembly, part of the 50S ribosomal subunit.

Its function is as follows. This protein binds to the 23S rRNA, and is important in its secondary structure. It is located near the subunit interface in the base of the L7/L12 stalk, and near the tRNA binding site of the peptidyltransferase center. The polypeptide is Large ribosomal subunit protein uL6 (Burkholderia mallei (strain NCTC 10247)).